A 93-amino-acid chain; its full sequence is Small ribosomal subunit protein bS20 (93 aa).

The segment covering 1-11 has biased composition (basic and acidic residues); that stretch reads MPQHKSAEKRV. The tract at residues 1–23 is disordered; it reads MPQHKSAEKRVRQSKRRNARNRV. Positions 12-23 are enriched in basic residues; sequence RQSKRRNARNRV.

The protein belongs to the bacterial ribosomal protein bS20 family.

Binds directly to 16S ribosomal RNA. The sequence is that of Small ribosomal subunit protein bS20 from Chloroherpeton thalassium (strain ATCC 35110 / GB-78).